A 332-amino-acid polypeptide reads, in one-letter code: Adenosine receptor A2b (332 aa).

Residues 1–8 (MPLEAQDA) lie on the Extracellular side of the membrane. The helical transmembrane segment at 9 to 33 (VYVALELALAALSVTGNVLVCAAVG) threads the bilayer. Topologically, residues 34–43 (TSSALQTPTN) are cytoplasmic. Residues 44 to 67 (YFLVSLAAADVAVGLFAIPFAVTI) form a helical membrane-spanning segment. The Extracellular segment spans residues 68 to 78 (SLGFCTDFHSC). Cysteine 78 and cysteine 170 are joined by a disulfide. Residues 79–101 (LFLACFVLVLTQSSIFSLLAVAV) form a helical membrane-spanning segment. Topologically, residues 102-121 (DRYLAVRVPLRYKSLVTGAR) are cytoplasmic. A helical transmembrane segment spans residues 122–144 (ARGVIAALWVLAFGIGLTPFLGW). Residues 145 to 177 (NDRKIATNCTEPGDAATNVSCCLIRCLFENVVP) are Extracellular-facing. N-linked (GlcNAc...) asparagine glycosylation is found at asparagine 152 and asparagine 162. Residue glutamate 173 coordinates adenosine. A helical transmembrane segment spans residues 178-202 (MSYMVYFNFFGCVLPPLLIMLVIYV). Residues 203–234 (KIFLVACRQLQRTELMDHSRTVLQREIHAAKS) are Cytoplasmic-facing. Residues 235–258 (LALIVGIFALCWLPVHTINCASLF) form a helical membrane-spanning segment. Residue asparagine 253 coordinates adenosine. Over 259-266 (QPTWAKVK) the chain is Extracellular. The helical transmembrane segment at 267–290 (PKWAINTAILLSHANSAVNPIVYA) threads the bilayer. Serine 278 and histidine 279 together coordinate adenosine. The Cytoplasmic portion of the chain corresponds to 291 to 332 (YRNRDFRYTFHKIISRYILCRTHILKSGEGQVGSQPTLQLGL). Residue cysteine 310 is the site of S-palmitoyl cysteine attachment.

Belongs to the G-protein coupled receptor 1 family.

The protein resides in the cell membrane. Receptor for adenosine. The activity of this receptor is mediated by G proteins which activate adenylyl cyclase. This is Adenosine receptor A2b (ADORA2B) from Bos taurus (Bovine).